The primary structure comprises 831 residues: DNA ligase (831 aa).

Residues 34–38 (DADYD), 83–84 (SL), and Glu114 contribute to the NAD(+) site. Lys116 (N6-AMP-lysine intermediate) is an active-site residue. 4 residues coordinate NAD(+): Arg137, Glu174, Lys291, and Lys315. Residues Cys409, Cys412, Cys427, and Cys433 each contribute to the Zn(2+) site. Residues 749–831 (AHTAPLNGQS…LAFLGQYSAQ (83 aa)) form the BRCT domain.

The protein belongs to the NAD-dependent DNA ligase family. LigA subfamily. It depends on Mg(2+) as a cofactor. The cofactor is Mn(2+).

It catalyses the reaction NAD(+) + (deoxyribonucleotide)n-3'-hydroxyl + 5'-phospho-(deoxyribonucleotide)m = (deoxyribonucleotide)n+m + AMP + beta-nicotinamide D-nucleotide.. Functionally, DNA ligase that catalyzes the formation of phosphodiester linkages between 5'-phosphoryl and 3'-hydroxyl groups in double-stranded DNA using NAD as a coenzyme and as the energy source for the reaction. It is essential for DNA replication and repair of damaged DNA. The chain is DNA ligase from Xylella fastidiosa (strain 9a5c).